The chain runs to 261 residues: Ribosome-inactivating protein PD-L1/PD-L2 (261 aa).

N-linked (GlcNAc...) asparagine; in PD-L1 and PD-L2 glycans are attached at residues Asn-10 and Asn-43. Disulfide bonds link Cys-34–Cys-258 and Cys-84–Cys-105. Tyr-72 is an active-site residue. Val-73 contacts substrate. Ser-120 contributes to the substrate binding site. Active-site residues include Tyr-122, Glu-175, and Arg-178. Position 178 (Arg-178) interacts with substrate. Asn-255 carries an N-linked (GlcNAc...) asparagine; in PD-L1 glycan.

This sequence belongs to the ribosome-inactivating protein family. Type 1 RIP subfamily. In terms of processing, N-glycosylated. Loss of glycosylation does not affect DNA-cleaving ability. Loss of glycosylation does not affect protein synthesis inhibition, but increases adenine polynucleotide glycosidase activity likely as a consequence of the increased accessibility of substrates to the active site pocket in the absence of glycosylation. In terms of tissue distribution, expressed in leaves (at protein level).

The enzyme catalyses Endohydrolysis of the N-glycosidic bond at one specific adenosine on the 28S rRNA.. Inhibits protein synthesis. Has adenine polynucleotide glycosidase activity on herring sperm (hs)DNA and poly(A) substrates. Cleaves supercoiled pBR322 dsDNA. This is Ribosome-inactivating protein PD-L1/PD-L2 from Phytolacca dioica (Bella sombra tree).